The sequence spans 64 residues: Large ribosomal subunit protein bL35 (64 aa).

Residues 1 to 10 (MPKMKTNSAA) show a composition bias toward polar residues. The tract at residues 1–64 (MPKMKTNSAA…AKKLHQLLQK (64 aa)) is disordered. Over residues 54–64 (QAKKLHQLLQK) the composition is skewed to basic residues.

The protein belongs to the bacterial ribosomal protein bL35 family.

The chain is Large ribosomal subunit protein bL35 from Bifidobacterium longum (strain NCC 2705).